A 93-amino-acid polypeptide reads, in one-letter code: Putative regulatory protein Clos_1422 (93 aa).

The protein belongs to the RemA family.

In Alkaliphilus oremlandii (strain OhILAs) (Clostridium oremlandii (strain OhILAs)), this protein is Putative regulatory protein Clos_1422.